Here is a 228-residue protein sequence, read N- to C-terminus: Octanoyltransferase (228 aa).

Residues 32–214 enclose the BPL/LPL catalytic domain; it reads DVVPDTVLLV…HLRRLFERDW (183 aa). Substrate-binding positions include 77 to 84, 144 to 146, and 157 to 159; these read RGGDVTYH, SVG, and GIA. The active-site Acyl-thioester intermediate is the Cys-175.

The protein belongs to the LipB family.

It localises to the cytoplasm. The catalysed reaction is octanoyl-[ACP] + L-lysyl-[protein] = N(6)-octanoyl-L-lysyl-[protein] + holo-[ACP] + H(+). Its pathway is protein modification; protein lipoylation via endogenous pathway; protein N(6)-(lipoyl)lysine from octanoyl-[acyl-carrier-protein]: step 1/2. In terms of biological role, catalyzes the transfer of endogenously produced octanoic acid from octanoyl-acyl-carrier-protein onto the lipoyl domains of lipoate-dependent enzymes. Lipoyl-ACP can also act as a substrate although octanoyl-ACP is likely to be the physiological substrate. This chain is Octanoyltransferase, found in Syntrophobacter fumaroxidans (strain DSM 10017 / MPOB).